Reading from the N-terminus, the 106-residue chain is uncharacterized protein (106 aa).

The interval 28–68 (SSANEPKKLPNKKLVSTKSHTQVNREKSKNKDTYEDYSDSN) is disordered. Positions 50-61 (VNREKSKNKDTY) are enriched in basic and acidic residues.

This is an uncharacterized protein from Acanthamoeba polyphaga (Amoeba).